The following is a 335-amino-acid chain: GTPase Obg (335 aa).

One can recognise an Obg domain in the interval Met-1 to Ile-158. Positions Ala-159–Ser-334 constitute an OBG-type G domain. Residues Gly-165–Ser-172, Phe-190–His-194, Asp-215–Gly-218, Asn-285–Asp-288, and Ser-315–Leu-317 contribute to the GTP site. Ser-172 and Thr-192 together coordinate Mg(2+).

The protein belongs to the TRAFAC class OBG-HflX-like GTPase superfamily. OBG GTPase family. As to quaternary structure, monomer. The cofactor is Mg(2+).

The protein resides in the cytoplasm. Functionally, an essential GTPase which binds GTP, GDP and possibly (p)ppGpp with moderate affinity, with high nucleotide exchange rates and a fairly low GTP hydrolysis rate. Plays a role in control of the cell cycle, stress response, ribosome biogenesis and in those bacteria that undergo differentiation, in morphogenesis control. This chain is GTPase Obg, found in Chlamydia trachomatis serovar L2 (strain ATCC VR-902B / DSM 19102 / 434/Bu).